A 289-amino-acid polypeptide reads, in one-letter code: Aquaporin PIP1-1 (289 aa).

The tract at residues 1–36 (MEGKEEDVRLGANRYSERQPIGTAAQGAGDDKDYKE) is disordered. Transmembrane regions (helical) follow at residues 58–78 (IAEF…VMGV) and 93–115 (IAWS…SGGH). The NPA 1 signature appears at 117-119 (NPA). A run of 3 helical transmembrane segments spans residues 136–156 (IFYI…VKGF), 178–198 (GDGL…VFSA), and 212–232 (ILAP…TIPI). Residues 238–240 (NPA) carry the NPA 2 motif. A helical membrane pass occupies residues 260–280 (IFWVGPFVGAALAAIYHQVII).

This sequence belongs to the MIP/aquaporin (TC 1.A.8) family. PIP (TC 1.A.8.11) subfamily. Expressed in roots, leaves and anthers.

It is found in the cell membrane. Functionally, may function as water channel to facilitate the transport of water across cell membrane. This chain is Aquaporin PIP1-1 (PIP1-1), found in Oryza sativa subsp. japonica (Rice).